Consider the following 171-residue polypeptide: uncharacterized protein (171 aa).

The protein to M.jannaschii MJ0417.

This is an uncharacterized protein from Methanocaldococcus jannaschii (strain ATCC 43067 / DSM 2661 / JAL-1 / JCM 10045 / NBRC 100440) (Methanococcus jannaschii).